The primary structure comprises 658 residues: MKLYCLSGHPTLPCNVLKFKSTTIMLDCGLDMTSTLNFLPLPLVQSPRLSNLPGWSLKDGNAFLDKELKECSGHVFVDSVPEFCLPETELIDLSTVDVILISNYHCMMALPYITEHTGFTGTVYATEPTVQIGRLLMEELVNFIERVPKAQSASLWKNKDIQRLLPSPLKDAVEVSTWRRCYTMQEVNSALSKIQLVGYSQKIELFGAVQVTPLSSGYALGSSNWIIQSHYEKVSYVSGSSLLTTHPQPMDQASLKNSDVLILTGLTQIPTANPDSMVGEFCSNLALTVRNGGNVLVPCYPSGVIYDLLECLYQYIDSAGLSSIPFYFISPVANSSLEFSQIFAEWLCHNKQTKVYLPEPPFPHAELIQTNKLKHYPSIHGDFSNDFRQPCVVFTGHPSLRFGDVVHFMELWGKSSLNTVIFTEPDFSYLEALAPYQPLAMKCIYCPIDTRLNFIQVSKLLKEVQPLHVVCPEQYTQPTPAQSHRMDLMVDCQPPAMSYRRAEVLALPFKRRYEKIEIMPELADSLVPMEIKPGISLATVSAVLHTKDNKHVLQPPPRPTQPTGGKKRKRASDDIPDCKVLKPLLSGSIPVDQFVQTLEKHGFSDIKVEDTAKGHIVLLQEAETLIQIEEDSTHIICDDDEVLRVRLRDLVLKFLQKF.

Lys58 is covalently cross-linked (Glycyl lysine isopeptide (Lys-Gly) (interchain with G-Cter in SUMO2)). The tract at residues 548-573 (DNKHVLQPPPRPTQPTGGKKRKRASD) is disordered. Residues 566-570 (KKRKR) carry the Nuclear localization signal motif.

The protein belongs to the metallo-beta-lactamase superfamily. RNA-metabolizing metallo-beta-lactamase-like family. INTS9 subfamily. Component of the Integrator complex, composed of core subunits INTS1, INTS2, INTS3, INTS4, INTS5, INTS6, INTS7, INTS8, INTS9/RC74, INTS10, INTS11/CPSF3L, INTS12, INTS13, INTS14 and INTS15. The core complex associates with protein phosphatase 2A subunits PPP2CA and PPP2R1A, to form the Integrator-PP2A (INTAC) complex. INTS9 is part of the RNA endonuclease subcomplex, composed of INTS4, INTS9, INTS11 and inositol hexakisphosphate (InsP6). Interacts with WDR73; interaction is required for the assembly of the RNA endonuclease subcomplex in the cytoplasm. Interacts with BRAT1; interaction is required for the assembly of the RNA endonuclease subcomplex. Interacts with ESRRB, ESRRB is not a core component of the Integrator complex and this association is a bridge for the interaction with the multiprotein complex Integrator; attracts the transcriptional machinery.

It localises to the nucleus. Its subcellular location is the cytoplasm. Its function is as follows. Component of the integrator complex, a multiprotein complex that terminates RNA polymerase II (Pol II) transcription in the promoter-proximal region of genes. The integrator complex provides a quality checkpoint during transcription elongation by driving premature transcription termination of transcripts that are unfavorably configured for transcriptional elongation: the complex terminates transcription by (1) catalyzing dephosphorylation of the C-terminal domain (CTD) of Pol II subunit POLR2A/RPB1 and SUPT5H/SPT5, (2) degrading the exiting nascent RNA transcript via endonuclease activity and (3) promoting the release of Pol II from bound DNA. The integrator complex is also involved in terminating the synthesis of non-coding Pol II transcripts, such as enhancer RNAs (eRNAs), small nuclear RNAs (snRNAs), telomerase RNAs and long non-coding RNAs (lncRNAs). Mediates recruitment of cytoplasmic dynein to the nuclear envelope, probably as component of the integrator complex. The polypeptide is Integrator complex subunit 9 (INTS9) (Bos taurus (Bovine)).